The sequence spans 84 residues: CDC42 small effector protein 2 (84 aa).

S-palmitoyl cysteine attachment occurs at residues cysteine 10 and cysteine 11. The region spanning isoleucine 29–glycine 42 is the CRIB domain. Phosphoserine is present on residues serine 43 and serine 52.

The protein belongs to the CDC42SE/SPEC family. Interacts with CDC42 (in GTP-bound form). Interacts weakly with RAC1 and not at all with RHOA. Widely expressed. Expressed at higher level in T-lymphocytes. Highly expressed in CCRF-CEM T-lymphocytes, Jurkat T-lymphocytes, and Raji B-lymphocytes compared (at protein level).

The protein localises to the cytoplasm. Its subcellular location is the cytoskeleton. It localises to the cell membrane. The protein resides in the cell projection. It is found in the phagocytic cup. In terms of biological role, probably involved in the organization of the actin cytoskeleton by acting downstream of CDC42, inducing actin filament assembly. Alters CDC42-induced cell shape changes. In activated T-cells, may play a role in CDC42-mediated F-actin accumulation at the immunological synapse. May play a role in early contractile events in phagocytosis in macrophages. This chain is CDC42 small effector protein 2 (CDC42SE2), found in Homo sapiens (Human).